Here is a 284-residue protein sequence, read N- to C-terminus: Ribosomal RNA small subunit methyltransferase A (284 aa).

Residues N26, L28, G53, E74, D97, and N127 each contribute to the S-adenosyl-L-methionine site.

Belongs to the class I-like SAM-binding methyltransferase superfamily. rRNA adenine N(6)-methyltransferase family. RsmA subfamily.

The protein localises to the cytoplasm. It carries out the reaction adenosine(1518)/adenosine(1519) in 16S rRNA + 4 S-adenosyl-L-methionine = N(6)-dimethyladenosine(1518)/N(6)-dimethyladenosine(1519) in 16S rRNA + 4 S-adenosyl-L-homocysteine + 4 H(+). Its function is as follows. Specifically dimethylates two adjacent adenosines (A1518 and A1519) in the loop of a conserved hairpin near the 3'-end of 16S rRNA in the 30S particle. May play a critical role in biogenesis of 30S subunits. The sequence is that of Ribosomal RNA small subunit methyltransferase A from Anaeromyxobacter dehalogenans (strain 2CP-C).